Consider the following 147-residue polypeptide: MSNFTAEDKAAITSLWGKVNVEDAGGETLGRLLVVYPWTQRFFDSFGSLSSPSAIMGNPKVKAHGVKVLTSLGEAIKNLDDLKGTFGSLSELHCDKLHVDPENFRLPGNVLVTVLAILHGKEFTPEVQASWQKMVAGVASALASRYH.

The region spanning 3–147 is the Globin domain; the sequence is NFTAEDKAAI…VASALASRYH (145 aa). Heme b contacts are provided by H64 and H93.

It belongs to the globin family. As to quaternary structure, heterotetramer of two alpha chains and two gamma chains in fetal hemoglobin (Hb F). In terms of tissue distribution, red blood cells.

In terms of biological role, gamma chains make up the fetal hemoglobin F, in combination with alpha chains. This chain is Hemoglobin subunit gamma (HBG), found in Alouatta seniculus (Red howler monkey).